A 144-amino-acid polypeptide reads, in one-letter code: Maximins 1/H1 (144 aa).

The signal sequence occupies residues 1–18; that stretch reads MNFKYIVAVSFLLASAYA. Residues 19–43 constitute a propeptide that is removed on maturation; the sequence is RSEENDEQSLSQRDVLEEESLREIR. At N70 the chain carries Asparagine amide. Positions 74–123 are excised as a propeptide; it reads TAEEHEVMKRLEAVMRDLDSLDYPEEAAERETRSFNQEEIANLFTKKEKR. Position 143 is a leucine amide (L143).

This sequence belongs to the bombinin family. In terms of tissue distribution, expressed by the skin glands.

It localises to the secreted. Its function is as follows. Antibacterial peptide with amphipathic alpha-helical structure that has activity against both Gram-positive and Gram-negative bacteria. Also shows antimicrobial activity against the fungus C.albicans, but not against A.flavus nor P.uticale. It has little hemolytic activity. It possess a significant cytotoxicity against tumor cell lines, but does not possess a significant anti-HIV activity. Also shows high spermicidal activity. In terms of biological role, antibacterial peptide with activity against both Gram-positive and Gram-negative bacteria. Also shows antimicrobial activity against the fungus C.albicans. In addition, shows strong hemolytic activity. This is Maximins 1/H1 from Bombina maxima (Giant fire-bellied toad).